A 199-amino-acid polypeptide reads, in one-letter code: MGSFKDDREEVLQAWYMDDSDEDQRLPHHRDPKEFVSLDQLAKLGVLSWRLDADNYETDEELKKIREARGYSYMDFCEVCPEKLPNYEEKIKNFFEEHLHTDEEIRYCVAGSGYFDVRDQNDSWIRVWLKKGGMIVLPAGIYHRFTLDSNNYIKAMRLFVGDPVWTPFNRPHDNLPARQEYLEAFGQKEAANHVVDAAA.

Fe(2+) contacts are provided by His98, His100, Glu104, and His143. Positions 98, 100, 104, and 143 each coordinate Ni(2+).

It belongs to the acireductone dioxygenase (ARD) family. Requires Fe(2+) as cofactor. It depends on Ni(2+) as a cofactor.

The protein localises to the cytoplasm. It localises to the nucleus. The catalysed reaction is 1,2-dihydroxy-5-(methylsulfanyl)pent-1-en-3-one + O2 = 4-methylsulfanyl-2-oxobutanoate + formate + 2 H(+). It catalyses the reaction 1,2-dihydroxy-5-(methylsulfanyl)pent-1-en-3-one + O2 = 3-(methylsulfanyl)propanoate + CO + formate + 2 H(+). It functions in the pathway amino-acid biosynthesis; L-methionine biosynthesis via salvage pathway; L-methionine from S-methyl-5-thio-alpha-D-ribose 1-phosphate: step 5/6. In terms of biological role, catalyzes 2 different reactions between oxygen and the acireductone 1,2-dihydroxy-3-keto-5-methylthiopentene (DHK-MTPene) depending upon the metal bound in the active site. Fe-containing acireductone dioxygenase (Fe-ARD) produces formate and 2-keto-4-methylthiobutyrate (KMTB), the alpha-ketoacid precursor of methionine in the methionine recycle pathway. Ni-containing acireductone dioxygenase (Ni-ARD) produces methylthiopropionate, carbon monoxide and formate, and does not lie on the methionine recycle pathway. This chain is Acireductone dioxygenase 2, found in Vitis vinifera (Grape).